A 184-amino-acid polypeptide reads, in one-letter code: uncharacterized protein (184 aa).

The signal sequence occupies residues 1-20; sequence MYQLEKIWVLLCLALVGVLG.

This is an uncharacterized protein from Drosophila melanogaster (Fruit fly).